Here is a 1102-residue protein sequence, read N- to C-terminus: WD repeat-containing protein 72 (1102 aa).

WD repeat units lie at residues 15-54 (APPHSITAIMITDDQRTIVTGSQEGQLCLWNLSHELKISA), 60-102 (GHSA…CMEK), 160-197 (NCMCIVHSMRIQEDSLLVVSVAGELKVWDLSSSINSIQ), 318-362 (KEQS…VSKF), 402-441 (AGTAVVTSSEYIPSLDKLICGCEDGTIIITQALNAAKARL), 459-504 (GHHQ…ILHK), 507-552 (LEAG…CLLH), and 555-594 (KHLFPVRMIKWHPVENFLIVGCADDSVYIWEIETGTLERH). Residues S1081 and S1083 each carry the phosphoserine modification.

The protein localises to the cytoplasmic vesicle. Functionally, plays a major role in formation of tooth enamel. Specifically required during the maturation phase of amelogenesis for normal formation of the enamel matrix and clearance of enamel proteins. May be involved in localization of the calcium transporter SLC24A4 to the ameloblast cell membrane. In Homo sapiens (Human), this protein is WD repeat-containing protein 72 (WDR72).